A 138-amino-acid polypeptide reads, in one-letter code: Small ribosomal subunit protein uS11c (138 aa).

The disordered stretch occupies residues 1-24 (MTKPIPRIGSRKNGRISSRKNGRR). A compositionally biased stretch (basic residues) spans 9 to 24 (GSRKNGRISSRKNGRR).

Belongs to the universal ribosomal protein uS11 family. In terms of assembly, part of the 30S ribosomal subunit.

It is found in the plastid. It localises to the chloroplast. This is Small ribosomal subunit protein uS11c from Chloranthus spicatus (Chulantree).